Consider the following 249-residue polypeptide: 5'-nucleotidase SurE (249 aa).

A divalent metal cation-binding residues include Asp8, Asp9, Ser39, and Asn91.

Belongs to the SurE nucleotidase family. The cofactor is a divalent metal cation.

It is found in the cytoplasm. The catalysed reaction is a ribonucleoside 5'-phosphate + H2O = a ribonucleoside + phosphate. Nucleotidase that shows phosphatase activity on nucleoside 5'-monophosphates. This chain is 5'-nucleotidase SurE, found in Haemophilus influenzae (strain PittEE).